Consider the following 174-residue polypeptide: Crossover junction endodeoxyribonuclease RuvC (174 aa).

Catalysis depends on residues aspartate 8, glutamate 69, and aspartate 141. 3 residues coordinate Mg(2+): aspartate 8, glutamate 69, and aspartate 141.

It belongs to the RuvC family. Homodimer which binds Holliday junction (HJ) DNA. The HJ becomes 2-fold symmetrical on binding to RuvC with unstacked arms; it has a different conformation from HJ DNA in complex with RuvA. In the full resolvosome a probable DNA-RuvA(4)-RuvB(12)-RuvC(2) complex forms which resolves the HJ. Requires Mg(2+) as cofactor.

It localises to the cytoplasm. It catalyses the reaction Endonucleolytic cleavage at a junction such as a reciprocal single-stranded crossover between two homologous DNA duplexes (Holliday junction).. Its function is as follows. The RuvA-RuvB-RuvC complex processes Holliday junction (HJ) DNA during genetic recombination and DNA repair. Endonuclease that resolves HJ intermediates. Cleaves cruciform DNA by making single-stranded nicks across the HJ at symmetrical positions within the homologous arms, yielding a 5'-phosphate and a 3'-hydroxyl group; requires a central core of homology in the junction. The consensus cleavage sequence is 5'-(A/T)TT(C/G)-3'. Cleavage occurs on the 3'-side of the TT dinucleotide at the point of strand exchange. HJ branch migration catalyzed by RuvA-RuvB allows RuvC to scan DNA until it finds its consensus sequence, where it cleaves and resolves the cruciform DNA. This Xanthomonas axonopodis pv. citri (strain 306) protein is Crossover junction endodeoxyribonuclease RuvC.